Consider the following 737-residue polypeptide: MKKGRLIAFFLFVLLIGTGLGYFTKPAANNITLGLDLQGGFEVLYDVQPVKKGDKITKDVLVSTVEALNRRANVLGVSEPNIQIEGNNRIRVQLAGVTNQNRAREILATEAQLSFRDANDKELLNGADLVENGAKQTYDSTTNEPIVTIKLKDADKFGEVTKKVMKMAPNNQLVIWLDYDKGDSFKKEVQKEHPKFVSAPNVSQELNTTDVKIEGHFTAQEAKDLASILNAGALPVKLTEKYSTSVGAQFGQQALHDTVFAGIVGIAIIFLFMLFYYRLPGLIAVITLSVYIYITLQIFDWMNAVLTLPGIAALILGVGMAVDANIITYERIKEELKLGKSVRSAFRSGNRRSFATIFDANITTIIAAVVLFIFGTSSVKGFATMLILSILTSFITAVFLSRFLLALLVESRWLDRKKGWFGVNKKHIMDIQDTDENTEPHTPFQKWDFTSKRKYFFIFSSAVTVAGIIILLVFRLNLGIDFASGARIEVQSDHKLTTEQVEKDFESLGMDPDTVVLSGEKSNIGVARFVGVPDKETIAKVKTYFKDKYGSDPNVSTVSPTVGKELARNALYAVAIASIGIIIYVSIRFEYKMAIAAIASLLYDAFFIVTFFSITRLEVDVTFIAAILTIIGYSINDTIVTFDRVREHMKKRKPKTFADLNHIVNLSLQQTFTRSINTVLTVVIVVVTLLIFGASSITNFSIALLVGLLTGVYSSLYIAAQIWLAWKGRELKKDSAQ.

Residues Met1–Arg5 lie on the Cytoplasmic side of the membrane. The secD stretch occupies residues Met1–Arg416. Residues Leu6–Pro26 traverse the membrane as a helical segment. Residues Ala27–Ala254 are Extracellular-facing. A helical membrane pass occupies residues Leu255–Phe275. Topologically, residues Tyr276 to Arg278 are cytoplasmic. Residues Leu279–Phe299 form a helical membrane-spanning segment. Residues Asp300–Trp301 are Extracellular-facing. Residues Met302–Val322 traverse the membrane as a helical segment. The Cytoplasmic portion of the chain corresponds to Asp323–Ser353. Residues Phe354 to Phe374 form a helical membrane-spanning segment. The Extracellular portion of the chain corresponds to Gly375–Lys380. Residues Gly381–Ser401 form a helical membrane-spanning segment. Topologically, residues Arg402–Arg453 are cytoplasmic. Residues Lys446–Gln737 are secF. The chain crosses the membrane as a helical span at residues Lys454–Phe474. The Extracellular portion of the chain corresponds to Arg475 to Asn569. Residues Ala570 to Glu590 form a helical membrane-spanning segment. The Cytoplasmic segment spans residues Tyr591–Met593. The helical transmembrane segment at Ala594–Ile614 threads the bilayer. Over Thr615–Val621 the chain is Extracellular. Residues Thr622–Phe642 traverse the membrane as a helical segment. Residues Asp643–Asn677 lie on the Cytoplasmic side of the membrane. Residues Thr678–Thr698 traverse the membrane as a helical segment. Position 699 (Asn699) is a topological domain, extracellular. A helical transmembrane segment spans residues Phe700–Ala720. Over Gln721–Gln737 the chain is Cytoplasmic.

The protein in the N-terminal section; belongs to the SecD/SecF family. SecD subfamily. It in the C-terminal section; belongs to the SecD/SecF family. SecF subfamily. As to quaternary structure, part of the essential Sec protein translocation apparatus which comprises SecA, SecYEG and auxiliary protein SecDF. Other proteins may also be involved.

It is found in the cell membrane. In terms of biological role, required for efficient translocation of secretory pre-proteins under conditions of hypersecretion but is not required for the release of mature proteins from the membrane. Its function is as follows. Part of the Sec protein translocase complex. Interacts with the SecYEG preprotein conducting channel. SecDF uses the proton motive force (PMF) to complete protein translocation after the ATP-dependent function of SecA. The polypeptide is Protein translocase subunit SecDF (secDF) (Bacillus subtilis (strain 168)).